Consider the following 264-residue polypeptide: Putative ankyrin repeat domain-containing protein 19 (264 aa).

ANK repeat units lie at residues 67–96, 100–129, 133–162, 166–195, and 199–228; these read KDRTVLHLTCAHGRVEVVTLLLSRRCQINI, LNRTPLMKAVHCQEEACAIILLEHGANPNI, YSNTALHYAVYNKGTSLAEKLLSHHANIEA, EGNTPLLFAINSRRQQIVEFLLKNQANLHA, and FRRTALMLAVQHNSSSIVSLLLQQNINIFS.

The polypeptide is Putative ankyrin repeat domain-containing protein 19 (ANKRD19P) (Homo sapiens (Human)).